Reading from the N-terminus, the 317-residue chain is UV DNA damage endonuclease (317 aa).

The protein belongs to the uve1/UvsE family.

In terms of biological role, component in a DNA repair pathway. Removal of UV LIGHT damaged nucleotides. Recognizes pyrimidine dimers and cleave a phosphodiester bond immediately 5' to the lesion. This chain is UV DNA damage endonuclease, found in Bacillus cereus (strain Q1).